Consider the following 213-residue polypeptide: Large ribosomal subunit protein uL18c (213 aa).

The protein belongs to the universal ribosomal protein uL18 family.

Its subcellular location is the plastid. It is found in the apicoplast. The chain is Large ribosomal subunit protein uL18c (RPL18) from Plasmodium falciparum (isolate 3D7).